A 743-amino-acid chain; its full sequence is Threonine synthase-like 1 (743 aa).

Lys-281 bears the N6-acetyllysine mark. Lys-351 bears the N6-(pyridoxal phosphate)lysine mark.

The protein belongs to the threonine synthase family. Requires pyridoxal 5'-phosphate as cofactor.

This Homo sapiens (Human) protein is Threonine synthase-like 1 (THNSL1).